A 267-amino-acid chain; its full sequence is Tryptophan synthase alpha chain (267 aa).

Residues Glu-43 and Asp-54 each act as proton acceptor in the active site.

The protein belongs to the TrpA family. Tetramer of two alpha and two beta chains.

The catalysed reaction is (1S,2R)-1-C-(indol-3-yl)glycerol 3-phosphate + L-serine = D-glyceraldehyde 3-phosphate + L-tryptophan + H2O. Its pathway is amino-acid biosynthesis; L-tryptophan biosynthesis; L-tryptophan from chorismate: step 5/5. Functionally, the alpha subunit is responsible for the aldol cleavage of indoleglycerol phosphate to indole and glyceraldehyde 3-phosphate. This chain is Tryptophan synthase alpha chain, found in Bacillus subtilis subsp. natto.